Reading from the N-terminus, the 84-residue chain is Coiled-coil-helix-coiled-coil-helix domain-containing protein 7 (84 aa).

The CHCH domain occupies 12–54 (SNPCLEETDASTKCMDENQYQKDLCTSYFIKYKNCRKFWNGIM). 2 short sequence motifs (cx9C motif) span residues 15–25 (CLEETDASTKC) and 36–46 (CTSYFIKYKNC). Intrachain disulfides connect cysteine 15/cysteine 46 and cysteine 25/cysteine 36.

The protein belongs to the CHCHD7 family.

Its subcellular location is the mitochondrion intermembrane space. The sequence is that of Coiled-coil-helix-coiled-coil-helix domain-containing protein 7 (chchd7) from Xenopus laevis (African clawed frog).